The following is a 248-amino-acid chain: MLNINNKIAKGGYVYSKNIRLAKSKIDKQKCYDVREACSIIKEISFAKFNETVDIAIKLGVNPSHSSQVVRGVAAMPSGTGKTVKVAVICQEEKLDEFKTTGADIVGSLDIIEAIKSGNIDYDVYITTPAMMVAVSQVARILGPKGLMPNPKLGTVTNDVAAVVKKVKSGQVEFKVDKAGNIHAGIGKISFSIDEIEANINALVSAIIKSKPSEAKGTYLNGIYLSTTMGPSVRLEISNFTESGNERR.

Belongs to the universal ribosomal protein uL1 family. In terms of assembly, part of the 50S ribosomal subunit.

In terms of biological role, binds directly to 23S rRNA. The L1 stalk is quite mobile in the ribosome, and is involved in E site tRNA release. Its function is as follows. Protein L1 is also a translational repressor protein, it controls the translation of the L11 operon by binding to its mRNA. The polypeptide is Large ribosomal subunit protein uL1 (Orientia tsutsugamushi (strain Boryong) (Rickettsia tsutsugamushi)).